Consider the following 393-residue polypeptide: 2-nitroimidazole transporter (393 aa).

Residues 1 to 12 lie on the Cytoplasmic side of the membrane; that stretch reads MTCSTSLSGKNR. The chain crosses the membrane as a helical span at residues 13–33; that stretch reads IVLIAGILMIATTLRVTFTGA. At 34 to 52 the chain is on the periplasmic side; that stretch reads APLLDTIRSAYSLTTAQTG. The helical transmembrane segment at 53–73 threads the bilayer; sequence LLTTLPLLAFALISPLAAPVA. At 74 to 80 the chain is on the cytoplasmic side; that stretch reads RRFGMER. 2 helical membrane-spanning segments follow: residues 81–101 and 102–122; these read SLFA…LPSP and YLLF…NVLL. Residues 123 to 140 are Cytoplasmic-facing; it reads PGLIKRDFPHSVARLTGA. A helical membrane pass occupies residues 141–161; the sequence is YSLTMGAAAALGSAMVVPLAL. At 162 to 163 the chain is on the periplasmic side; the sequence is NG. A helical transmembrane segment spans residues 164-184; it reads FGWQGALLMLMCFPLLALFLW. At 185-218 the chain is on the cytoplasmic side; the sequence is LPQWRSQQHANLSTSRALHTRGIWRSPLAWQVTL. A helical membrane pass occupies residues 219–239; the sequence is FLGINSLVYYVIIGWLPAILI. Topologically, residues 240 to 249 are periplasmic; the sequence is SHGYSEAQAG. The helical transmembrane segment at 250–270 threads the bilayer; it reads SLHGLLQLATAAPGLLIPLFL. Topologically, residues 271 to 278 are cytoplasmic; sequence HHVKDQRG. A helical transmembrane segment spans residues 279 to 299; that stretch reads IAAFVALMCAVGAVGLCFMPA. At 300 to 304 the chain is on the periplasmic side; sequence HAITW. Residues 305–325 form a helical membrane-spanning segment; sequence TLLFGFGSGATMILGLTFIGL. The Cytoplasmic segment spans residues 326-334; the sequence is RASSAHQAA. The helical transmembrane segment at 335–355 threads the bilayer; it reads ALSGMAQSVGYLLAACGPPLM. The Periplasmic portion of the chain corresponds to 356–366; the sequence is GKIHDANGNWS. Residues 367-387 traverse the membrane as a helical segment; it reads VPLMGVAILSLLMAIFGLCAG. At 388–393 the chain is on the cytoplasmic side; it reads RDKEIR.

Belongs to the major facilitator superfamily. Cyanate porter (TC 2.A.1.17) family.

Its subcellular location is the cell inner membrane. In terms of biological role, involved in efflux of 2-nitroimidazole. In Escherichia coli (strain K12), this protein is 2-nitroimidazole transporter.